A 442-amino-acid polypeptide reads, in one-letter code: Septin-8 (442 aa).

Alanine 2 bears the N-acetylalanine mark. Serine 10 bears the Phosphoserine mark. Positions 41–307 (QGFSFNILCV…ELYRRCKLEE (267 aa)) constitute a Septin-type G domain. Positions 51-58 (GETGIGKS) are G1 motif. GTP is bound by residues 51–58 (GETGIGKS), glycine 106, 187–195 (KADTISKSE), glycine 241, and arginine 256. Residues 103–106 (DAVG) form a G3 motif region. Residues 186-189 (AKAD) form a G4 motif region. The stretch at 322–410 (LQETYEAKRK…RKAAVEALQS (89 aa)) forms a coiled coil. Over residues 377 to 391 (HQEEKRKVEEKRREL) the composition is skewed to basic and acidic residues. The interval 377–442 (HQEEKRKVEE…WSSIYSVTIP (66 aa)) is disordered. 2 stretches are compositionally biased toward polar residues: residues 408–420 (LQSQALHATSQQP) and 432–442 (GWSSIYSVTIP).

The protein belongs to the TRAFAC class TrmE-Era-EngA-EngB-Septin-like GTPase superfamily. Septin GTPase family. In terms of assembly, septins polymerize into heterooligomeric protein complexes that form filaments, and can associate with cellular membranes, actin filaments and microtubules. GTPase activity is required for filament formation. Interacts with CDK14, SEPTIN4, SEPTIN5 and SEPTIN7. Interacts with VAMP2; the interaction inhibits interaction of VAMP2 with SYP. Interacts with STX1A.

It is found in the cytoplasm. The protein resides in the cytoskeleton. Its subcellular location is the synapse. It localises to the cell projection. The protein localises to the axon. It is found in the cytoplasmic vesicle. The protein resides in the secretory vesicle. Its subcellular location is the synaptic vesicle membrane. It localises to the presynapse. Filament-forming cytoskeletal GTPase. May play a role in platelet secretion. Seems to participate in the process of SNARE complex formation in synaptic vesicles. The sequence is that of Septin-8 from Callithrix jacchus (White-tufted-ear marmoset).